The chain runs to 412 residues: FAD-dependent monooxygenase nscC (412 aa).

An N-terminal signal peptide occupies residues 1–21; the sequence is MGKQQETILIIGAGIAGLTTS. Glutamate 35 and alanine 46 together coordinate FAD. N-linked (GlcNAc...) asparagine glycosylation is present at asparagine 92. FAD is bound at residue arginine 119. 2 N-linked (GlcNAc...) asparagine glycosylation sites follow: asparagine 170 and asparagine 231. Residues aspartate 326 and glycine 339 each coordinate FAD.

This sequence belongs to the paxM FAD-dependent monooxygenase family. FAD serves as cofactor.

The protein operates within secondary metabolite biosynthesis. In terms of biological role, FAD-dependent monooxygenase; part of the gene cluster that mediates the biosynthesis of neosartoricin B, a prenylated anthracenone that probably exhibits T-cell antiproliferative activity, suggestive of a physiological role as an immunosuppressive agent. The non-reducing polyketide synthase nscA probably synthesizes and cyclizes the decaketide backbone. The hydrolase nscB then mediates the product release through hydrolysis followed by spontaneous decarboxylation. The prenyltransferase nscD catalyzes the addition of the dimethylallyl group to the aromatic C5. The FAD-dependent monooxygenase nscC is then responsible for the stereospecific hydroxylation at C2. Neosartoricin B can be converted into two additional compounds neosartoricins C and D. Neosartoricin C is a spirocyclic compound that is cyclized through the attack of C3 hydroxyl on C14, followed by dehydration. On the other hand, neosartoricin D is a further cyclized compound in which attack of C2 on C14 in neosartoricin C results in the formation of the acetal-containing dioxabicyclo-octanone ring. Both of these compounds are novel and possibly represent related metabolites of the gene cluster. This is FAD-dependent monooxygenase nscC from Arthroderma benhamiae (strain ATCC MYA-4681 / CBS 112371) (Trichophyton mentagrophytes).